The chain runs to 36 residues: Pancreatic polypeptide (36 aa).

Tyrosine 36 is modified (tyrosine amide).

Belongs to the NPY family.

It localises to the secreted. Its function is as follows. Hormone secreted by pancreatic cells that acts as a regulator of pancreatic and gastrointestinal functions probably by signaling through the G protein-coupled receptor NPY4R2. The polypeptide is Pancreatic polypeptide (PPY) (Chinchilla chinchilla (Short-tailed chinchilla)).